A 229-amino-acid polypeptide reads, in one-letter code: Uracil-DNA glycosylase (229 aa).

Asp67 acts as the Proton acceptor in catalysis.

The protein belongs to the uracil-DNA glycosylase (UDG) superfamily. UNG family.

The protein localises to the cytoplasm. The catalysed reaction is Hydrolyzes single-stranded DNA or mismatched double-stranded DNA and polynucleotides, releasing free uracil.. In terms of biological role, excises uracil residues from the DNA which can arise as a result of misincorporation of dUMP residues by DNA polymerase or due to deamination of cytosine. The chain is Uracil-DNA glycosylase from Coxiella burnetii (strain RSA 493 / Nine Mile phase I).